The following is a 664-amino-acid chain: Intraflagellar transport protein 70B (664 aa).

TPR repeat units lie at residues 11–44 (DGEFTAVVYRLIRDSRYSEAVQLLSAELQRSSRS), 45–78 (RAGLSLLAYCYYRLQEFELAAECYEQLSQMHPEL), 153–186 (YDGQINLGCLLYKEGHYEAACSKFLAALQASGYQ), 188–220 (DLSYNLALAYYSSRQYAPALKHIADIIERGIRQ), 385–418 (LTEQLRKLTIQVQDSRHSRDDESAKKAVNEYDET), 423–456 (IPVLMAQAKIYWNFENYPMVEKIFRKSVEFCNDH), and 458–491 (VWKLNVAHVLFMQENKYKEAIGFYEPIVKKNYDN). A coiled-coil region spans residues 507 to 534 (YIMTSQNEEAEELMRKIEKEEEQLSYGD). A TPR 8 repeat occupies 543-576 (CIVNLVIGTLYCAKGNYDFGISRVIKSLEPYHKK).

Belongs to the TTC30/dfy-1/fleer family. In terms of assembly, interacts with the IFT B complex components IFT27, IFT46, IFT74, IFT52, IFT57, IFT80, IFT81 and IFT88. Interacts with KIF17.

The protein localises to the cell projection. It localises to the cilium. Its function is as follows. Required for polyglutamylation of axonemal tubulin. Plays a role in anterograde intraflagellar transport (IFT), the process by which cilia precursors are transported from the base of the cilium to the site of their incorporation at the tip. The polypeptide is Intraflagellar transport protein 70B (Ift70b) (Mus musculus (Mouse)).